An 845-amino-acid polypeptide reads, in one-letter code: Beta-mannosidase B (845 aa).

Residue Glu-432 is the Proton donor of the active site. Residues Asn-717 and Asn-723 are each glycosylated (N-linked (GlcNAc...) asparagine).

Belongs to the glycosyl hydrolase 2 family. Beta-mannosidase B subfamily.

The enzyme catalyses Hydrolysis of terminal, non-reducing beta-D-mannose residues in beta-D-mannosides.. It functions in the pathway glycan metabolism; N-glycan degradation. In terms of biological role, exoglycosidase that cleaves the single beta-linked mannose residue from the non-reducing end of beta-mannosidic oligosaccharides of various complexity and length. Prefers mannobiose over mannotriose and has no activity against polymeric mannan. Is also severely restricted by galactosyl substitutions at the +1 subsite. The chain is Beta-mannosidase B (mndB) from Aspergillus clavatus (strain ATCC 1007 / CBS 513.65 / DSM 816 / NCTC 3887 / NRRL 1 / QM 1276 / 107).